The sequence spans 179 residues: MPRLKDKYQNDVIPAMMEKFGYKNKMQVPKLEKIVINIGLGEALQNPKAVDAAVADLMAITGQRPVLTKAKKSVAGFRVRQGATIGVKVTLRGDRMYEFMDKFVNIVLPRVRDFRGLSPKSFDGRGNYSVGLREQLIFPEIDYDKIDKVRGMEVTFVTTAKTDEEARELLQLMGMPFSR.

The protein belongs to the universal ribosomal protein uL5 family. In terms of assembly, part of the 50S ribosomal subunit; part of the 5S rRNA/L5/L18/L25 subcomplex. Contacts the 5S rRNA and the P site tRNA. Forms a bridge to the 30S subunit in the 70S ribosome.

This is one of the proteins that bind and probably mediate the attachment of the 5S RNA into the large ribosomal subunit, where it forms part of the central protuberance. In the 70S ribosome it contacts protein S13 of the 30S subunit (bridge B1b), connecting the 2 subunits; this bridge is implicated in subunit movement. Contacts the P site tRNA; the 5S rRNA and some of its associated proteins might help stabilize positioning of ribosome-bound tRNAs. The polypeptide is Large ribosomal subunit protein uL5 (Carboxydothermus hydrogenoformans (strain ATCC BAA-161 / DSM 6008 / Z-2901)).